Reading from the N-terminus, the 381-residue chain is Tryptophan--tRNA ligase (381 aa).

A 'HIGH' region motif is present at residues 82 to 90 (PSLGMHIGH). The short motif at 254–258 (KMSSS) is the 'KMSKS' region element.

This sequence belongs to the class-I aminoacyl-tRNA synthetase family.

The protein localises to the cytoplasm. The enzyme catalyses tRNA(Trp) + L-tryptophan + ATP = L-tryptophyl-tRNA(Trp) + AMP + diphosphate + H(+). The protein is Tryptophan--tRNA ligase of Sulfolobus acidocaldarius (strain ATCC 33909 / DSM 639 / JCM 8929 / NBRC 15157 / NCIMB 11770).